We begin with the raw amino-acid sequence, 165 residues long: Cytochrome c-type biogenesis protein CcmE (165 aa).

Topologically, residues 1 to 7 (MTRKQKR) are cytoplasmic. Residues 8–28 (LAIIGGGMSFIVAAVLLVMFA) form a helical; Signal-anchor for type II membrane protein membrane-spanning segment. Topologically, residues 29–165 (FGQSIAYFYM…ASGDKTGATK (137 aa)) are periplasmic. Histidine 123 and tyrosine 127 together coordinate heme. The segment at 138-165 (DKGLWQQGAEGAAPAASAASGDKTGATK) is disordered. The span at 145 to 158 (GAEGAAPAASAASG) shows a compositional bias: low complexity.

Belongs to the CcmE/CycJ family.

It is found in the cell inner membrane. In terms of biological role, heme chaperone required for the biogenesis of c-type cytochromes. Transiently binds heme delivered by CcmC and transfers the heme to apo-cytochromes in a process facilitated by CcmF and CcmH. This is Cytochrome c-type biogenesis protein CcmE from Agrobacterium fabrum (strain C58 / ATCC 33970) (Agrobacterium tumefaciens (strain C58)).